The following is a 274-amino-acid chain: MQQLQNVIETAFERRADITPANVDTVTREAITHVIDLLDTGALRVAEKIDGQWVTHQWLKKAVLLSFRINDNQVMEGAETRYYDKVPMKFAGYDEARFQREGFRVVPPATVRKGAFIARNTVLMPSYVNIGAFVDEGTMVDTWATVGSCAQIGKNVHLSGGVGIGGVLEPLQANPTIIEDNCFVGARSEVVEGVIVEEGSVISMGVFIGQSTRIYDRETGEVHYGRVPAGSVVVSGNLPSKDGSYSLYCAVIVKKVDAKTRSKVGINELLRTID.

Arg-104 and Asp-141 together coordinate substrate.

Belongs to the transferase hexapeptide repeat family. In terms of assembly, homotrimer.

The protein localises to the cytoplasm. The catalysed reaction is (S)-2,3,4,5-tetrahydrodipicolinate + succinyl-CoA + H2O = (S)-2-succinylamino-6-oxoheptanedioate + CoA. The protein operates within amino-acid biosynthesis; L-lysine biosynthesis via DAP pathway; LL-2,6-diaminopimelate from (S)-tetrahydrodipicolinate (succinylase route): step 1/3. This is 2,3,4,5-tetrahydropyridine-2,6-dicarboxylate N-succinyltransferase from Yersinia pestis.